We begin with the raw amino-acid sequence, 119 residues long: Holo-[acyl-carrier-protein] synthase (119 aa).

Asp-8 and Glu-58 together coordinate Mg(2+).

The protein belongs to the P-Pant transferase superfamily. AcpS family. It depends on Mg(2+) as a cofactor.

The protein resides in the cytoplasm. The enzyme catalyses apo-[ACP] + CoA = holo-[ACP] + adenosine 3',5'-bisphosphate + H(+). Its function is as follows. Transfers the 4'-phosphopantetheine moiety from coenzyme A to a Ser of acyl-carrier-protein. The chain is Holo-[acyl-carrier-protein] synthase from Oceanobacillus iheyensis (strain DSM 14371 / CIP 107618 / JCM 11309 / KCTC 3954 / HTE831).